Here is a 158-residue protein sequence, read N- to C-terminus: uncharacterized protein (158 aa).

Residues 13–110 (ESVGRALELV…WGDEYLPRPE (98 aa)) enclose the HTH hxlR-type domain.

This is an uncharacterized protein from Mycobacterium tuberculosis (strain CDC 1551 / Oshkosh).